Here is a 613-residue protein sequence, read N- to C-terminus: Probable indole-3-acetic acid-amido synthetase GH3.12 (613 aa).

Belongs to the IAA-amido conjugating enzyme family. Expressed in roots.

Functionally, may catalyze the synthesis of indole-3-acetic acid (IAA)-amino acid conjugates, providing a mechanism for the plant to cope with the presence of excess auxin. The sequence is that of Probable indole-3-acetic acid-amido synthetase GH3.12 (GH3.12) from Oryza sativa subsp. japonica (Rice).